We begin with the raw amino-acid sequence, 259 residues long: DNA-directed RNA polymerase subunit Rpo3 (259 aa).

It belongs to the archaeal Rpo3/eukaryotic RPB3 RNA polymerase subunit family. As to quaternary structure, part of the RNA polymerase complex.

Its subcellular location is the cytoplasm. It catalyses the reaction RNA(n) + a ribonucleoside 5'-triphosphate = RNA(n+1) + diphosphate. In terms of biological role, DNA-dependent RNA polymerase (RNAP) catalyzes the transcription of DNA into RNA using the four ribonucleoside triphosphates as substrates. The sequence is that of DNA-directed RNA polymerase subunit Rpo3 from Pyrobaculum arsenaticum (strain DSM 13514 / JCM 11321 / PZ6).